The sequence spans 311 residues: Histidine decarboxylase proenzyme (311 aa).

Positions 64 and 82 each coordinate substrate. Pyruvic acid (Ser) is present on Ser-83. The active-site Proton donor is the Glu-198.

In terms of assembly, the proenzyme is a hexamer of identical pi chains; each pi chain monomer is cleaved to form a small (or beta) chain and a large (or alpha) chain by non-hydrolytic self-catalysis. Requires pyruvate as cofactor.

The enzyme catalyses L-histidine + H(+) = histamine + CO2. This is Histidine decarboxylase proenzyme (hdcA) from Lactobacillus sp. (strain 30a).